A 192-amino-acid polypeptide reads, in one-letter code: Thymidine kinase (192 aa).

ATP-binding positions include 9-16 (SAMNAGKS) and 87-90 (DECQ). E88 (proton acceptor) is an active-site residue. C145, C147, C182, and H185 together coordinate Zn(2+).

It belongs to the thymidine kinase family. In terms of assembly, homotetramer.

It localises to the cytoplasm. It catalyses the reaction thymidine + ATP = dTMP + ADP + H(+). This chain is Thymidine kinase, found in Vibrio vulnificus (strain CMCP6).